We begin with the raw amino-acid sequence, 191 residues long: uncharacterized protein (191 aa).

Positions 1-23 (MKKTMSAITAAAAVTSCFTGFGA) are cleaved as a signal peptide.

This is an uncharacterized protein from Bacillus subtilis (strain 168).